The following is a 333-amino-acid chain: Adenosine deaminase (333 aa).

Zn(2+) is bound by residues histidine 12 and histidine 14. Residues histidine 14, aspartate 16, and glycine 170 each coordinate substrate. Residue histidine 197 participates in Zn(2+) binding. The active-site Proton donor is the glutamate 200. Zn(2+) is bound at residue aspartate 278. Residue aspartate 279 participates in substrate binding.

This sequence belongs to the metallo-dependent hydrolases superfamily. Adenosine and AMP deaminases family. Adenosine deaminase subfamily. Requires Zn(2+) as cofactor.

It carries out the reaction adenosine + H2O + H(+) = inosine + NH4(+). The catalysed reaction is 2'-deoxyadenosine + H2O + H(+) = 2'-deoxyinosine + NH4(+). Its function is as follows. Catalyzes the hydrolytic deamination of adenosine and 2-deoxyadenosine. This is Adenosine deaminase from Salmonella dublin (strain CT_02021853).